Here is a 185-residue protein sequence, read N- to C-terminus: HTH-type transcriptional repressor OpcR (185 aa).

A DNA-binding region (H-T-H motif) is located at residues 49–73 (LSELSEATGMSKTRMSQVVREMIDA).

It belongs to the GbsR family.

Its activity is regulated as follows. Is not choline-responsive. Functionally, negatively regulates the transcription of the opuC operon. In the absence of GbsR, is also a negative regulator of the opuB operon. Binds to an inverted repeat in the promoter region of the operons. The polypeptide is HTH-type transcriptional repressor OpcR (opcR) (Bacillus subtilis (strain 168)).